A 489-amino-acid chain; its full sequence is UDP-N-acetylmuramate--L-alanine ligase (489 aa).

An ATP-binding site is contributed by 128-134 (GTHGKTT).

The protein belongs to the MurCDEF family.

The protein resides in the cytoplasm. The catalysed reaction is UDP-N-acetyl-alpha-D-muramate + L-alanine + ATP = UDP-N-acetyl-alpha-D-muramoyl-L-alanine + ADP + phosphate + H(+). It participates in cell wall biogenesis; peptidoglycan biosynthesis. Its function is as follows. Cell wall formation. This chain is UDP-N-acetylmuramate--L-alanine ligase, found in Shewanella woodyi (strain ATCC 51908 / MS32).